The following is a 265-amino-acid chain: Short-chain dehydrogenase/reductase phqE (265 aa).

NADP(+) is bound by residues T23, S24, I26, S46, N47, K50, D76, R131, V203, and T205. Residues 25–45 (GIGFAVCAAALGHGAIVTIVG) traverse the membrane as a helical segment.

It belongs to the short-chain dehydrogenases/reductases (SDR) family. The cofactor is NADP(+).

It is found in the membrane. It participates in alkaloid biosynthesis. In terms of biological role, short-chain dehydrogenase/reductase; part of the gene cluster that mediates the biosynthesis of paraherquamide, a fungal indole alkaloid that belongs to a family of natural products containing a characteristic bicyclo[2.2.2]diazaoctane core. The first steps in the biosynthesis of paraherquamide is the production of the beta-methyl-proline precursor from L-isoleucine. They require oxidation of a terminally hydroxylated L-isoleucine to the corresponding aldehyde by enzymes which have still to be identified. Spontaneous cyclization and dehydration would yield the 4-methyl pyrolline-5-carboxylic acid, which is then reduced by the pyrroline-5-carboxylate reductase phqD leading to the beta-methyl-proline precursor. The next step of paraherquamide biosynthesis involves coupling of beta-methyl-proline and L-tryptophan by the bimodular NRPS phqB, to produce a monooxopiperazine intermediate. The reductase (R) domain of phqB utilizes NADPH for hydride transfer to reduce the thioester bond of the T domain-tethered linear dipeptide to a hemithioaminal intermediate, which spontaneously cleaves the C-S bond to release the aldehyde product. This compound undergoes spontaneous cyclization and dehydration to give a dienamine which is reverse prenylated at C-2 by the reverse prenyltransferase phqJ. The other prenyltransferase present in the cluster, phqI may be a redundant gene in the pathway. During biosynthetic assembly, the key step to produce the polycyclic core is catalyzed by the bifunctional reductase and intramolecular [4+2] Diels-Alderase, phqE, resulting in formation of the [2.2.2] diazaoctane intermediate preparaherquamide. Following formation of preparaherquamide, an indole 2,3-epoxidation-initiated pinacol-like rearrangement is catalyzed by the phqK FAD-dependent monooxygenase. The prenyltransferase phqA, the cytochrome P450 monooxygenase phqL, and the FAD-linked oxidoreductase phqH (or the cytochrome P450 monooxygenase phqM), are proposed to be involved in the formation of the pyran ring. The FAD-dependent monooxygenase phqK is likely responsible for generation of the spiro-oxindole, and the N-methylation is likely mediated by the phqN methyltransferase leading to the isolable natural product paraherquamide F. However, the order of these biosynthetic steps has still to be determined. In late-stage paraherquamide biosynthesis, the third P450 monooxygenase, phqO, is probably responsible for the C-14 hydroxylation, transforming paraherquamide F to paraherquamide G, and paraherquamide E to the final product paraherquamide A. The expansion from the 6-membered ring pyran (in paraherquamides F and G) to the 7-membered dioxepin ring (in paraherquamides A and E) represents a poorly understood but intriguing process that probably involves the 2-oxoglutarate-dependent dioxygenase phqC. Finally, the remaining members of the paraherquamide cluster, including phqI as well as phqM (or phqH), do not have a clearly prescribed role and appear to be redundant. The sequence is that of Short-chain dehydrogenase/reductase phqE from Penicillium fellutanum.